The following is a 655-amino-acid chain: ATP-dependent RNA helicase mss116, mitochondrial (655 aa).

The transit peptide at 1–56 (MMLGAVRRYGVVHALRASVPRTICRPSNSQLLRCQTSPVTACPQSVRLLHKSSPFF) directs the protein to the mitochondrion. The Q motif signature appears at 84 to 113 (DLAERGLVDPKIIRAIVKDMNIKTMTDVQS). The Helicase ATP-binding domain occupies 116–307 (LREILQGDDV…RKTMKPNFKF (192 aa)). 129–136 (AKTGTGKT) provides a ligand contact to ATP. The DEAD box signature appears at 251–254 (DEAD). In terms of domain architecture, Helicase C-terminal spans 341–503 (EFVTKYVEGE…TFATATVDMT (163 aa)). The interval 594-642 (YRGSSDNMSTRPDYRGGDRDMWASNSRRGREFNSDRRESRFGNHRNADD) is disordered. Composition is skewed to basic and acidic residues over residues 605–614 (PDYRGGDRDM) and 621–642 (RGREFNSDRRESRFGNHRNADD).

This sequence belongs to the DEAD box helicase family. DDX18/HAS1 subfamily.

The protein localises to the mitochondrion matrix. It carries out the reaction ATP + H2O = ADP + phosphate + H(+). ATP-dependent RNA helicase required for mitochondrial splicing of group I and II introns. Also required for efficient mitochondrial translation. The sequence is that of ATP-dependent RNA helicase mss116, mitochondrial (mss116) from Aspergillus fumigatus (strain ATCC MYA-4609 / CBS 101355 / FGSC A1100 / Af293) (Neosartorya fumigata).